The following is a 206-amino-acid chain: Large ribosomal subunit protein uL4 (206 aa).

Belongs to the universal ribosomal protein uL4 family. In terms of assembly, part of the 50S ribosomal subunit.

In terms of biological role, one of the primary rRNA binding proteins, this protein initially binds near the 5'-end of the 23S rRNA. It is important during the early stages of 50S assembly. It makes multiple contacts with different domains of the 23S rRNA in the assembled 50S subunit and ribosome. Functionally, forms part of the polypeptide exit tunnel. The protein is Large ribosomal subunit protein uL4 of Afipia carboxidovorans (strain ATCC 49405 / DSM 1227 / KCTC 32145 / OM5) (Oligotropha carboxidovorans).